Consider the following 348-residue polypeptide: tRNA pseudouridine synthase D (348 aa).

The active-site Nucleophile is Asp81. One can recognise a TRUD domain in the interval 158–304 (GVPNYFGAQR…MRHERRSIEL (147 aa)).

Belongs to the pseudouridine synthase TruD family.

It catalyses the reaction uridine(13) in tRNA = pseudouridine(13) in tRNA. Functionally, responsible for synthesis of pseudouridine from uracil-13 in transfer RNAs. This is tRNA pseudouridine synthase D from Aliivibrio salmonicida (strain LFI1238) (Vibrio salmonicida (strain LFI1238)).